We begin with the raw amino-acid sequence, 448 residues long: NK1 transcription factor-related protein 1 (448 aa).

Over residues Met1–Pro13 the composition is skewed to low complexity. Disordered stretches follow at residues Met1–Thr80, Ala115–Ala299, and Lys350–Leu397. The segment covering Ala14–Pro30 has biased composition (pro residues). 2 stretches are compositionally biased toward low complexity: residues Pro62 to Pro79 and Ala115 to Pro129. The segment covering Pro130–Ala139 has biased composition (basic and acidic residues). A compositionally biased stretch (acidic residues) spans Ser186–Glu203. The span at Glu205–Arg214 shows a compositional bias: basic and acidic residues. Gly residues-rich tracts occupy residues Gly215 to Cys227 and Pro259 to Gly270. Over residues Thr271–Ala280 the composition is skewed to low complexity. Positions Pro296–Asn355 form a DNA-binding region, homeobox. Over residues Thr364–Gly382 the composition is skewed to gly residues.

The protein belongs to the NK-1 homeobox family. Expressed in hemopoietic progenitor cells.

Its subcellular location is the nucleus. May be required for the coordinated crosstalk of factors involved in the maintenance of energy homeostasis, possibly by regulating the transcription of specific factors involved in energy balance. The chain is NK1 transcription factor-related protein 1 from Homo sapiens (Human).